Reading from the N-terminus, the 954-residue chain is Translation initiation factor IF-2 (954 aa).

The segment covering 56 to 75 has biased composition (low complexity); sequence KAAAPAAPKAPAPAAESRPA. A disordered region spans residues 56 to 355; it reads KAAAPAAPKA…GVSVPRGDGN (300 aa). The segment covering 76–87 has biased composition (pro residues); it reads APAPGPAAPKAP. 2 stretches are compositionally biased toward low complexity: residues 88-125 and 138-151; these read APKV…KPGA and PRQG…SAPR. Positions 241-254 are enriched in pro residues; the sequence is PGAPRPGGPRPTPG. The span at 269-322 shows a compositional bias: gly residues; it reads GRPGGGGRGPGRPGAPGTGGPGGGGGAPAGGGFGKGGRGRGGTQGAFGKGGAGR. Residues 323–332 show a composition bias toward basic residues; that stretch reads GKQRKSKRAK. One can recognise a tr-type G domain in the interval 447 to 618; sequence PRAPVVTVMG…AVLLTADAAL (172 aa). The interval 456-463 is G1; it reads GHVDHGKT. GTP is bound at residue 456 to 463; it reads GHVDHGKT. The G2 stretch occupies residues 481–485; the sequence is GITQH. The G3 stretch occupies residues 506–509; sequence DTPG. Residues 506–510 and 560–563 each bind GTP; these read DTPGH and NKID. The tract at residues 560–563 is G4; it reads NKID. Residues 596-598 are G5; sequence SAR.

The protein belongs to the TRAFAC class translation factor GTPase superfamily. Classic translation factor GTPase family. IF-2 subfamily.

It is found in the cytoplasm. One of the essential components for the initiation of protein synthesis. Protects formylmethionyl-tRNA from spontaneous hydrolysis and promotes its binding to the 30S ribosomal subunits. Also involved in the hydrolysis of GTP during the formation of the 70S ribosomal complex. This Pseudarthrobacter chlorophenolicus (strain ATCC 700700 / DSM 12829 / CIP 107037 / JCM 12360 / KCTC 9906 / NCIMB 13794 / A6) (Arthrobacter chlorophenolicus) protein is Translation initiation factor IF-2.